We begin with the raw amino-acid sequence, 441 residues long: MKPLIAIVGRPNVGKSTLFNRLVGRRKAMVDDMPGVTRDRNYADVNRFDVPFILIDTGGFEPETSDRLLQQMREQSQLAMDEADLILFVMDGRDGLTPADVEVVEMLRRVNKPVFYVVNKIDGDRQENAAGDFYSLGIEQIFTISAEHNRGVNDLMEEVIAALPNKTAPAVDEEVTRIAVIGRPNVGKSTLVNRLLGVERVVANPTPGTTRDSIDTYFNCNKKRYLLIDTAGIRRKGKTTEKIEKYSVVDSLRSIERADVVLIVIDAEEGVTEQDTKIAGYAFEAGRGCIFVVNKWDAISKDNASMGIFVEKIRMEFKYLPFAPIVFVSAKTGQRLGKIMTEVDSVMEQFAKRISTSDLNRVFSKAVEEHHAPLYQGRRVKFYFATQVGTKPPSIVIFTNRPDGVHFSYERYIINRFRDAFGFTGTPMRLLFKGREGRKRG.

EngA-type G domains follow at residues 3 to 167 (PLIA…PNKT) and 176 to 351 (TRIA…EQFA). GTP is bound by residues 9–16 (GRPNVGKS), 56–60 (DTGGF), 119–122 (NKID), 182–189 (GRPNVGKS), 229–233 (DTAGI), and 294–297 (NKWD). Residues 352-436 (KRISTSDLNR…PMRLLFKGRE (85 aa)) form the KH-like domain.

The protein belongs to the TRAFAC class TrmE-Era-EngA-EngB-Septin-like GTPase superfamily. EngA (Der) GTPase family. As to quaternary structure, associates with the 50S ribosomal subunit.

Functionally, GTPase that plays an essential role in the late steps of ribosome biogenesis. The sequence is that of GTPase Der from Geotalea daltonii (strain DSM 22248 / JCM 15807 / FRC-32) (Geobacter daltonii).